The chain runs to 340 residues: Ketol-acid reductoisomerase (NADP(+)) (340 aa).

Residues 1 to 183 enclose the KARI N-terminal Rossmann domain; that stretch reads MAITVYYDKD…GGGRTGIIET (183 aa). NADP(+) contacts are provided by residues 26–29, Arg-49, Ser-52, Ser-54, and 84–87; these read FGSQ and DEIQ. His-109 is a catalytic residue. Gly-135 contributes to the NADP(+) binding site. Residues 184-329 form the KARI C-terminal knotted domain; that stretch reads TFKAETETDL…RNLRAMMPWI (146 aa). Residues Asp-192, Glu-196, Glu-228, and Glu-232 each contribute to the Mg(2+) site. Ser-253 lines the substrate pocket.

Belongs to the ketol-acid reductoisomerase family. Mg(2+) is required as a cofactor.

The catalysed reaction is (2R)-2,3-dihydroxy-3-methylbutanoate + NADP(+) = (2S)-2-acetolactate + NADPH + H(+). It carries out the reaction (2R,3R)-2,3-dihydroxy-3-methylpentanoate + NADP(+) = (S)-2-ethyl-2-hydroxy-3-oxobutanoate + NADPH + H(+). Its pathway is amino-acid biosynthesis; L-isoleucine biosynthesis; L-isoleucine from 2-oxobutanoate: step 2/4. It participates in amino-acid biosynthesis; L-valine biosynthesis; L-valine from pyruvate: step 2/4. Functionally, involved in the biosynthesis of branched-chain amino acids (BCAA). Catalyzes an alkyl-migration followed by a ketol-acid reduction of (S)-2-acetolactate (S2AL) to yield (R)-2,3-dihydroxy-isovalerate. In the isomerase reaction, S2AL is rearranged via a Mg-dependent methyl migration to produce 3-hydroxy-3-methyl-2-ketobutyrate (HMKB). In the reductase reaction, this 2-ketoacid undergoes a metal-dependent reduction by NADPH to yield (R)-2,3-dihydroxy-isovalerate. This Campylobacter jejuni subsp. jejuni serotype O:23/36 (strain 81-176) protein is Ketol-acid reductoisomerase (NADP(+)).